Reading from the N-terminus, the 275-residue chain is Formamidopyrimidine-DNA glycosylase (275 aa).

Residue Pro-2 is the Schiff-base intermediate with DNA of the active site. Glu-3 serves as the catalytic Proton donor. Catalysis depends on Lys-58, which acts as the Proton donor; for beta-elimination activity. Residues His-93, Arg-111, and Arg-156 each coordinate DNA. The FPG-type zinc-finger motif lies at Phe-241–Arg-275. Residue Arg-265 is the Proton donor; for delta-elimination activity of the active site.

It belongs to the FPG family. In terms of assembly, monomer. Zn(2+) is required as a cofactor.

The catalysed reaction is Hydrolysis of DNA containing ring-opened 7-methylguanine residues, releasing 2,6-diamino-4-hydroxy-5-(N-methyl)formamidopyrimidine.. It catalyses the reaction 2'-deoxyribonucleotide-(2'-deoxyribose 5'-phosphate)-2'-deoxyribonucleotide-DNA = a 3'-end 2'-deoxyribonucleotide-(2,3-dehydro-2,3-deoxyribose 5'-phosphate)-DNA + a 5'-end 5'-phospho-2'-deoxyribonucleoside-DNA + H(+). Functionally, involved in base excision repair of DNA damaged by oxidation or by mutagenic agents. Acts as a DNA glycosylase that recognizes and removes damaged bases. Has a preference for oxidized purines, such as 7,8-dihydro-8-oxoguanine (8-oxoG). Has AP (apurinic/apyrimidinic) lyase activity and introduces nicks in the DNA strand. Cleaves the DNA backbone by beta-delta elimination to generate a single-strand break at the site of the removed base with both 3'- and 5'-phosphates. The polypeptide is Formamidopyrimidine-DNA glycosylase (Burkholderia multivorans (strain ATCC 17616 / 249)).